The following is a 333-amino-acid chain: Glycerol-3-phosphate dehydrogenase [NAD(P)+] (333 aa).

The NADPH site is built by Trp-12, Lys-33, and Lys-105. Sn-glycerol 3-phosphate is bound by residues Lys-105, Gly-136, and Ser-138. Ala-140 provides a ligand contact to NADPH. Sn-glycerol 3-phosphate contacts are provided by Lys-191, Asp-244, Ser-254, Arg-255, and Asn-256. The active-site Proton acceptor is Lys-191. Arg-255 is a binding site for NADPH. Positions 279 and 281 each coordinate NADPH.

Belongs to the NAD-dependent glycerol-3-phosphate dehydrogenase family.

It is found in the cytoplasm. It catalyses the reaction sn-glycerol 3-phosphate + NAD(+) = dihydroxyacetone phosphate + NADH + H(+). The enzyme catalyses sn-glycerol 3-phosphate + NADP(+) = dihydroxyacetone phosphate + NADPH + H(+). The protein operates within membrane lipid metabolism; glycerophospholipid metabolism. Its function is as follows. Catalyzes the reduction of the glycolytic intermediate dihydroxyacetone phosphate (DHAP) to sn-glycerol 3-phosphate (G3P), the key precursor for phospholipid synthesis. This is Glycerol-3-phosphate dehydrogenase [NAD(P)+] from Protochlamydia amoebophila (strain UWE25).